The chain runs to 160 residues: S-ribosylhomocysteine lyase (160 aa).

Fe cation-binding residues include H57, H61, and C127.

The protein belongs to the LuxS family. As to quaternary structure, homodimer. It depends on Fe cation as a cofactor.

The enzyme catalyses S-(5-deoxy-D-ribos-5-yl)-L-homocysteine = (S)-4,5-dihydroxypentane-2,3-dione + L-homocysteine. Involved in the synthesis of autoinducer 2 (AI-2) which is secreted by bacteria and is used to communicate both the cell density and the metabolic potential of the environment. The regulation of gene expression in response to changes in cell density is called quorum sensing. Catalyzes the transformation of S-ribosylhomocysteine (RHC) to homocysteine (HC) and 4,5-dihydroxy-2,3-pentadione (DPD). The polypeptide is S-ribosylhomocysteine lyase (Streptococcus thermophilus (strain CNRZ 1066)).